The sequence spans 296 residues: MAPSNLPSVFNATSQDIEMLLAAQCHLGSKNLQVHMENYLWKTRADGVNVLNVGKTWEKIVLAARIIAAIDNPADVCVISARPYGQRAVLKFASHTGATAIAGRFTPGSFTNYITRSFKEPRLIVVTDPRTDAQAIKEASYVNIPVIALTDTDSPTEYVDVAIPTNNKGRHAIGCVWWMLAREVLRLRGTIYSRETPWDVMVDLYFYRDPEAEAEEKVEEEKVPGAEEEGPAAIESGFAATGGDWEAPAAGFAGATGTGWDGAAGDEWGAAPATTEWAASAAPAAASGEAAKETTW.

Residues Trp245–Trp296 are disordered. Residues Ala263 to Glu289 show a composition bias toward low complexity.

This sequence belongs to the universal ribosomal protein uS2 family. As to quaternary structure, component of the small ribosomal subunit. Mature ribosomes consist of a small (40S) and a large (60S) subunit. The 40S subunit contains about 33 different proteins and 1 molecule of RNA (18S). The 60S subunit contains about 49 different proteins and 3 molecules of RNA (25S, 5.8S and 5S). Interacts with RPS21.

It is found in the cytoplasm. Functionally, required for the assembly and/or stability of the 40S ribosomal subunit. Required for the processing of the 20S rRNA-precursor to mature 18S rRNA in a late step of the maturation of 40S ribosomal subunits. The protein is Small ribosomal subunit protein uS2 of Fusarium vanettenii (strain ATCC MYA-4622 / CBS 123669 / FGSC 9596 / NRRL 45880 / 77-13-4) (Fusarium solani subsp. pisi).